The following is a 354-amino-acid chain: Rhodopsin (354 aa).

The Extracellular segment spans residues 1–36 (MNGTEGPYFYVPMVNTTGIVRSPYEYPQYYLVSPAA). N2 and N15 each carry an N-linked (GlcNAc...) asparagine glycan. A helical membrane pass occupies residues 37 to 61 (YACLGAYMFFLILVGFPINFLTLYV). Over 62–73 (TIEHKKLRTPLN) the chain is Cytoplasmic. The helical transmembrane segment at 74-96 (YILLNLAVADLFMVFGGFTTTIY) threads the bilayer. At 97–110 (TSMHGYFVLGRLGC) the chain is on the extracellular side. Residues C110 and C187 are joined by a disulfide bond. A helical membrane pass occupies residues 111–133 (NLEGYFATLGGEIGLWSLVVLAV). The 'Ionic lock' involved in activated form stabilization signature appears at 134–136 (ERW). The Cytoplasmic segment spans residues 134 to 152 (ERWLVVCKPISNFRFSENH). A helical transmembrane segment spans residues 153 to 173 (AIMGLVFTWIMANSCAAPPLL). Over 174–202 (GWSRYIPEGMQCSCGVDYYTRAEGFNNES) the chain is Extracellular. The helical transmembrane segment at 203–224 (FVIYMFICHFCIPLIVVFFCYG) threads the bilayer. The Cytoplasmic portion of the chain corresponds to 225–252 (RLLCAVKEAAAAQQESETTQRAEREVTR). A helical transmembrane segment spans residues 253 to 274 (MVVIMVIGFLVCWIPYASVAWY). Topologically, residues 275–286 (IFTHQGSEFGPL) are extracellular. Residues 287–308 (FMTVPAFFAKSASIYNPLIYIC) traverse the membrane as a helical segment. The residue at position 296 (K296) is an N6-(retinylidene)lysine. Over 309-354 (MNKQFRHCMITTLCCGKNPFEEEEGASTTASKTEASSVSSSSVSPA) the chain is Cytoplasmic. 2 S-palmitoyl cysteine lipidation sites follow: C322 and C323. The segment at 333–354 (GASTTASKTEASSVSSSSVSPA) is disordered. Positions 334–354 (ASTTASKTEASSVSSSSVSPA) are enriched in low complexity.

The protein belongs to the G-protein coupled receptor 1 family. Opsin subfamily. Phosphorylated on some or all of the serine and threonine residues present in the C-terminal region. Post-translationally, contains one covalently linked retinal chromophore.

The protein resides in the membrane. It localises to the cell projection. The protein localises to the cilium. It is found in the photoreceptor outer segment. Functionally, photoreceptor required for image-forming vision at low light intensity. While most salt water fish species use retinal as chromophore, most freshwater fish use 3-dehydroretinal, or a mixture of retinal and 3-dehydroretinal. Light-induced isomerization of 11-cis to all-trans retinal triggers a conformational change that activates signaling via G-proteins. Subsequent receptor phosphorylation mediates displacement of the bound G-protein alpha subunit by arrestin and terminates signaling. The chain is Rhodopsin (rho) from Poecilia reticulata (Guppy).